Here is an 85-residue protein sequence, read N- to C-terminus: Beta-defensin 18 (85 aa).

An N-terminal signal peptide occupies residues M1–S23. Intrachain disulfides connect C39–C65, C46–C60, and C50–C66.

The protein belongs to the beta-defensin family.

It localises to the secreted. Its function is as follows. Has antibacterial activity. The sequence is that of Beta-defensin 18 (Defb18) from Rattus norvegicus (Rat).